A 211-amino-acid chain; its full sequence is uncharacterized protein (211 aa).

Residues Met-1–Pro-43 form a disordered region.

This is an uncharacterized protein from Homo sapiens (Human).